The primary structure comprises 1484 residues: DNA-directed RNA polymerase subunit beta' (1484 aa).

4 residues coordinate Zn(2+): Cys67, Cys69, Cys82, and Cys85. Mg(2+) is bound by residues Asp499, Asp501, and Asp503. 4 residues coordinate Zn(2+): Cys867, Cys943, Cys950, and Cys953.

The protein belongs to the RNA polymerase beta' chain family. In terms of assembly, the RNAP catalytic core consists of 2 alpha, 1 beta, 1 beta' and 1 omega subunit. When a sigma factor is associated with the core the holoenzyme is formed, which can initiate transcription. Requires Mg(2+) as cofactor. Zn(2+) serves as cofactor.

The catalysed reaction is RNA(n) + a ribonucleoside 5'-triphosphate = RNA(n+1) + diphosphate. In terms of biological role, DNA-dependent RNA polymerase catalyzes the transcription of DNA into RNA using the four ribonucleoside triphosphates as substrates. This is DNA-directed RNA polymerase subunit beta' from Chlorobium phaeovibrioides (strain DSM 265 / 1930) (Prosthecochloris vibrioformis (strain DSM 265)).